A 197-amino-acid chain; its full sequence is Probable molybdenum cofactor guanylyltransferase (197 aa).

GTP contacts are provided by residues 10 to 12, Lys-22, Asp-73, and Asp-102; that span reads LCG. Residue Asp-102 coordinates Mg(2+).

This sequence belongs to the MobA family. It depends on Mg(2+) as a cofactor.

The protein localises to the cytoplasm. It catalyses the reaction Mo-molybdopterin + GTP + H(+) = Mo-molybdopterin guanine dinucleotide + diphosphate. Transfers a GMP moiety from GTP to Mo-molybdopterin (Mo-MPT) cofactor (Moco or molybdenum cofactor) to form Mo-molybdopterin guanine dinucleotide (Mo-MGD) cofactor. The sequence is that of Probable molybdenum cofactor guanylyltransferase from Methanothermobacter thermautotrophicus (strain ATCC 29096 / DSM 1053 / JCM 10044 / NBRC 100330 / Delta H) (Methanobacterium thermoautotrophicum).